Here is a 339-residue protein sequence, read N- to C-terminus: Ketol-acid reductoisomerase (NADP(+)) (339 aa).

The KARI N-terminal Rossmann domain maps to methionine 1 to threonine 182. NADP(+)-binding positions include tyrosine 24–glutamine 27, lysine 48, serine 51, threonine 53, and aspartate 83–glutamine 86. Residue histidine 108 is part of the active site. Glycine 134 lines the NADP(+) pocket. A KARI C-terminal knotted domain is found at asparagine 183 to isoleucine 328. Mg(2+) contacts are provided by aspartate 191, glutamate 195, glutamate 227, and glutamate 231. Serine 252 serves as a coordination point for substrate.

This sequence belongs to the ketol-acid reductoisomerase family. Mg(2+) serves as cofactor.

It catalyses the reaction (2R)-2,3-dihydroxy-3-methylbutanoate + NADP(+) = (2S)-2-acetolactate + NADPH + H(+). The catalysed reaction is (2R,3R)-2,3-dihydroxy-3-methylpentanoate + NADP(+) = (S)-2-ethyl-2-hydroxy-3-oxobutanoate + NADPH + H(+). It participates in amino-acid biosynthesis; L-isoleucine biosynthesis; L-isoleucine from 2-oxobutanoate: step 2/4. Its pathway is amino-acid biosynthesis; L-valine biosynthesis; L-valine from pyruvate: step 2/4. Functionally, involved in the biosynthesis of branched-chain amino acids (BCAA). Catalyzes an alkyl-migration followed by a ketol-acid reduction of (S)-2-acetolactate (S2AL) to yield (R)-2,3-dihydroxy-isovalerate. In the isomerase reaction, S2AL is rearranged via a Mg-dependent methyl migration to produce 3-hydroxy-3-methyl-2-ketobutyrate (HMKB). In the reductase reaction, this 2-ketoacid undergoes a metal-dependent reduction by NADPH to yield (R)-2,3-dihydroxy-isovalerate. This chain is Ketol-acid reductoisomerase (NADP(+)), found in Rhizobium meliloti (strain 1021) (Ensifer meliloti).